A 117-amino-acid polypeptide reads, in one-letter code: Large ribosomal subunit protein uL18 (117 aa).

It belongs to the universal ribosomal protein uL18 family. As to quaternary structure, part of the 50S ribosomal subunit; part of the 5S rRNA/L5/L18/L25 subcomplex. Contacts the 5S and 23S rRNAs.

Its function is as follows. This is one of the proteins that bind and probably mediate the attachment of the 5S RNA into the large ribosomal subunit, where it forms part of the central protuberance. This is Large ribosomal subunit protein uL18 from Sodalis glossinidius (strain morsitans).